A 407-amino-acid polypeptide reads, in one-letter code: uncharacterized protein (407 aa).

Disordered stretches follow at residues 1–64 (MSRK…EPFD), 110–276 (GFGP…YPQF), and 314–341 (QSRPRKSSHDRHKHHNKHKHHNGHHNNP). The segment covering 7-32 (KQSNPKRNYKNDNYFQENSYTMTNGF) has biased composition (polar residues). The segment covering 33–44 (TKDKDGKPVEFK) has biased composition (basic and acidic residues). Over residues 122 to 137 (DSDSEYSDECLTDECS) the composition is skewed to acidic residues. 2 stretches are compositionally biased toward polar residues: residues 138–147 (DNYNKQSTDS) and 184–201 (NFDNTVPIPQNDTTNSQP). The segment covering 209–231 (SKSSSKSSKSNKSNKSSKSNKSS) has biased composition (low complexity). Residues 232–246 (KSSKSKSNKHSKHKN) show a composition bias toward basic residues. A compositionally biased stretch (basic and acidic residues) spans 247-258 (KSDSSSDSDEKT). 2 stretches are compositionally biased toward basic residues: residues 259–270 (HKHKDRRHRRGR) and 316–341 (RPRKSSHDRHKHHNKHKHHNGHHNNP).

This is an uncharacterized protein from Acanthamoeba polyphaga mimivirus (APMV).